The primary structure comprises 314 residues: DNA topoisomerase 1 (314 aa).

In terms of domain architecture, Topo IB-type catalytic spans 73–314 (GKMHVQRRNS…TDYITNTQTV (242 aa)). Tyr273 functions as the O-(3'-phospho-DNA)-tyrosine intermediate in the catalytic mechanism.

This sequence belongs to the type IB topoisomerase family.

The enzyme catalyses ATP-independent breakage of single-stranded DNA, followed by passage and rejoining.. Releases the supercoiling and torsional tension of DNA introduced during the DNA replication and transcription by transiently cleaving and rejoining one strand of the DNA duplex. Introduces a single-strand break via transesterification at a target site in duplex DNA. The scissile phosphodiester is attacked by the catalytic tyrosine of the enzyme, resulting in the formation of a DNA-(3'-phosphotyrosyl)-enzyme intermediate and the expulsion of a 5'-OH DNA strand. The free DNA strand then undergoes passage around the unbroken strand thus removing DNA supercoils. Finally, in the religation step, the DNA 5'-OH attacks the covalent intermediate to expel the active-site tyrosine and restore the DNA phosphodiester backbone. The sequence is that of DNA topoisomerase 1 (TOP1) from Oryctolagus cuniculus (Rabbit).